An 823-amino-acid chain; its full sequence is Nuclear pore complex protein Nup93-1 (823 aa).

The protein belongs to the nucleoporin interacting component (NIC) family. As to quaternary structure, part of the nuclear pore complex (NPC). Interacts with msk (via C-terminus); this association might be facilitated by Nup75. Interacts with Mad (preferentially when phosphorylated). Interacts with Nup154 (via N-terminus). Interacts with the Polycomb group (PcG) proteins Pc and E(z).

Its subcellular location is the nucleus membrane. The protein resides in the nucleus. It is found in the nuclear pore complex. The protein localises to the nucleoplasm. Functionally, required for nuclear pore complex assembly, maintenance and function. Required for nuclear import of phosphorylated Mad via importin msk. Has no role in classical nuclear localization signal (cNLS)-dependent nuclear import via importin-beta. Mediates the association between the nuclear pore complex and a subclass of silenced regions bound by Polycomb group (PcG) proteins, enables long-range interactions between Polycomb loci and contributes to repression of polycomb targets. Together with Nup62 and Nup154, contributes to karyosome morphology and chromatin organization including attachment to the nuclear envelope in oocytes and nurse cells. The protein is Nuclear pore complex protein Nup93-1 of Drosophila melanogaster (Fruit fly).